The following is a 349-amino-acid chain: Small ribosomal subunit biogenesis GTPase RsgA (349 aa).

Positions Met1 to Glu38 are disordered. In terms of domain architecture, CP-type G spans Thr102–Phe272. GTP is bound by residues Asn158–Asp161 and Gly212–Ser220. Residues Cys296, Cys301, His303, and Cys309 each coordinate Zn(2+).

This sequence belongs to the TRAFAC class YlqF/YawG GTPase family. RsgA subfamily. As to quaternary structure, monomer. Associates with 30S ribosomal subunit, binds 16S rRNA. It depends on Zn(2+) as a cofactor.

It localises to the cytoplasm. Functionally, one of several proteins that assist in the late maturation steps of the functional core of the 30S ribosomal subunit. Helps release RbfA from mature subunits. May play a role in the assembly of ribosomal proteins into the subunit. Circularly permuted GTPase that catalyzes slow GTP hydrolysis, GTPase activity is stimulated by the 30S ribosomal subunit. The protein is Small ribosomal subunit biogenesis GTPase RsgA of Serratia proteamaculans (strain 568).